The sequence spans 259 residues: 5'-nucleotidase SurE (259 aa).

A divalent metal cation-binding residues include D8, D9, S40, and N92.

This sequence belongs to the SurE nucleotidase family. It depends on a divalent metal cation as a cofactor.

It is found in the cytoplasm. The catalysed reaction is a ribonucleoside 5'-phosphate + H2O = a ribonucleoside + phosphate. Its function is as follows. Nucleotidase that shows phosphatase activity on nucleoside 5'-monophosphates. In Xanthomonas campestris pv. campestris (strain B100), this protein is 5'-nucleotidase SurE.